Consider the following 302-residue polypeptide: Sulfate adenylyltransferase subunit 2 (302 aa).

Belongs to the PAPS reductase family. CysD subfamily. Heterodimer composed of CysD, the smaller subunit, and CysN.

The enzyme catalyses sulfate + ATP + H(+) = adenosine 5'-phosphosulfate + diphosphate. It functions in the pathway sulfur metabolism; hydrogen sulfide biosynthesis; sulfite from sulfate: step 1/3. Functionally, with CysN forms the ATP sulfurylase (ATPS) that catalyzes the adenylation of sulfate producing adenosine 5'-phosphosulfate (APS) and diphosphate, the first enzymatic step in sulfur assimilation pathway. APS synthesis involves the formation of a high-energy phosphoric-sulfuric acid anhydride bond driven by GTP hydrolysis by CysN coupled to ATP hydrolysis by CysD. The polypeptide is Sulfate adenylyltransferase subunit 2 (Bacteroides thetaiotaomicron (strain ATCC 29148 / DSM 2079 / JCM 5827 / CCUG 10774 / NCTC 10582 / VPI-5482 / E50)).